The following is a 103-amino-acid chain: MQNQRIRIRLKGFDHRLIDQSTAEIVETAKRTGAQVRGPIPLPTRKERFTVLISPHVNKDARDQYEIRTHKRLVDIVEPTEKTVDALMRLDLAAGVDVQISLG.

Belongs to the universal ribosomal protein uS10 family. As to quaternary structure, part of the 30S ribosomal subunit.

Functionally, involved in the binding of tRNA to the ribosomes. The polypeptide is Small ribosomal subunit protein uS10 (Shewanella denitrificans (strain OS217 / ATCC BAA-1090 / DSM 15013)).